The following is a 156-amino-acid chain: Arginine repressor (156 aa).

The protein belongs to the ArgR family.

The protein localises to the cytoplasm. It functions in the pathway amino-acid biosynthesis; L-arginine biosynthesis [regulation]. Its function is as follows. Regulates arginine biosynthesis genes. The sequence is that of Arginine repressor from Proteus mirabilis (strain HI4320).